Reading from the N-terminus, the 159-residue chain is Ribosomal RNA large subunit methyltransferase H (159 aa).

Residues Leu-76, Gly-108, and 127–132 (FSKMTF) each bind S-adenosyl-L-methionine.

It belongs to the RNA methyltransferase RlmH family. Homodimer.

It localises to the cytoplasm. It catalyses the reaction pseudouridine(1915) in 23S rRNA + S-adenosyl-L-methionine = N(3)-methylpseudouridine(1915) in 23S rRNA + S-adenosyl-L-homocysteine + H(+). In terms of biological role, specifically methylates the pseudouridine at position 1915 (m3Psi1915) in 23S rRNA. The chain is Ribosomal RNA large subunit methyltransferase H from Clostridium botulinum (strain Kyoto / Type A2).